A 607-amino-acid polypeptide reads, in one-letter code: Protease Do-like 2, chloroplastic (607 aa).

Positions 41-104 (SSNIKRKSSR…LSDFSRDQQT (64 aa)) are disordered. Over residues 87–104 (PKKEKKESLSDFSRDQQT) the composition is skewed to basic and acidic residues. The segment at 118–317 (VVKVYCTHTA…LTDYERNGKY (200 aa)) is serine protease. Catalysis depends on charge relay system residues His159, Asp190, and Ser268. One can recognise a PDZ domain in the interval 308–403 (LTDYERNGKY…YLISQKFAGD (96 aa)).

The protein belongs to the peptidase S1C family.

It localises to the plastid. Its subcellular location is the chloroplast thylakoid membrane. Serine protease that performs the primary cleavage of the photodamaged D1 protein in plant photosystem II. The protein is Protease Do-like 2, chloroplastic (DEGP2) of Arabidopsis thaliana (Mouse-ear cress).